The primary structure comprises 280 residues: Lacto-N-neotetraose biosynthesis glycosyltransferase LgtE (280 aa).

This sequence belongs to the glycosyltransferase 25 family.

The protein operates within glycan metabolism; lacto-N-neotetraose biosynthesis. It participates in bacterial outer membrane biogenesis; lipooligosaccharide biosynthesis. Functionally, adds the first galactose to the lacto-N-tetraose chain in lipooligosaccharide (LOS). The chain is Lacto-N-neotetraose biosynthesis glycosyltransferase LgtE (lgtE) from Neisseria gonorrhoeae.